The primary structure comprises 207 residues: Thiamine-phosphate synthase (207 aa).

4-amino-2-methyl-5-(diphosphooxymethyl)pyrimidine contacts are provided by residues 36–40 (QLRMK) and asparagine 68. Mg(2+) contacts are provided by aspartate 69 and aspartate 88. A 4-amino-2-methyl-5-(diphosphooxymethyl)pyrimidine-binding site is contributed by serine 106. 132 to 134 (TNT) provides a ligand contact to 2-[(2R,5Z)-2-carboxy-4-methylthiazol-5(2H)-ylidene]ethyl phosphate. Lysine 135 is a 4-amino-2-methyl-5-(diphosphooxymethyl)pyrimidine binding site. 2-[(2R,5Z)-2-carboxy-4-methylthiazol-5(2H)-ylidene]ethyl phosphate is bound by residues glycine 162 and 182 to 183 (VS).

This sequence belongs to the thiamine-phosphate synthase family. The cofactor is Mg(2+).

It carries out the reaction 2-[(2R,5Z)-2-carboxy-4-methylthiazol-5(2H)-ylidene]ethyl phosphate + 4-amino-2-methyl-5-(diphosphooxymethyl)pyrimidine + 2 H(+) = thiamine phosphate + CO2 + diphosphate. The catalysed reaction is 2-(2-carboxy-4-methylthiazol-5-yl)ethyl phosphate + 4-amino-2-methyl-5-(diphosphooxymethyl)pyrimidine + 2 H(+) = thiamine phosphate + CO2 + diphosphate. The enzyme catalyses 4-methyl-5-(2-phosphooxyethyl)-thiazole + 4-amino-2-methyl-5-(diphosphooxymethyl)pyrimidine + H(+) = thiamine phosphate + diphosphate. Its pathway is cofactor biosynthesis; thiamine diphosphate biosynthesis; thiamine phosphate from 4-amino-2-methyl-5-diphosphomethylpyrimidine and 4-methyl-5-(2-phosphoethyl)-thiazole: step 1/1. Condenses 4-methyl-5-(beta-hydroxyethyl)thiazole monophosphate (THZ-P) and 2-methyl-4-amino-5-hydroxymethyl pyrimidine pyrophosphate (HMP-PP) to form thiamine monophosphate (TMP). This is Thiamine-phosphate synthase from Methanococcus maripaludis (strain C7 / ATCC BAA-1331).